We begin with the raw amino-acid sequence, 125 residues long: Putative oxygen-evolving enhancer protein 2-2 (125 aa).

At serine 15 the chain carries Phosphoserine.

Belongs to the PsbP family.

This Arabidopsis thaliana (Mouse-ear cress) protein is Putative oxygen-evolving enhancer protein 2-2 (PSBP2).